Consider the following 420-residue polypeptide: Histidine--tRNA ligase (420 aa).

Belongs to the class-II aminoacyl-tRNA synthetase family. In terms of assembly, homodimer.

The protein resides in the cytoplasm. It catalyses the reaction tRNA(His) + L-histidine + ATP = L-histidyl-tRNA(His) + AMP + diphosphate + H(+). The chain is Histidine--tRNA ligase from Ureaplasma parvum serovar 3 (strain ATCC 27815 / 27 / NCTC 11736).